Here is a 618-residue protein sequence, read N- to C-terminus: DNA mismatch repair protein MutL (618 aa).

It belongs to the DNA mismatch repair MutL/HexB family.

Functionally, this protein is involved in the repair of mismatches in DNA. It is required for dam-dependent methyl-directed DNA mismatch repair. May act as a 'molecular matchmaker', a protein that promotes the formation of a stable complex between two or more DNA-binding proteins in an ATP-dependent manner without itself being part of a final effector complex. The chain is DNA mismatch repair protein MutL from Porphyromonas gingivalis (strain ATCC 33277 / DSM 20709 / CIP 103683 / JCM 12257 / NCTC 11834 / 2561).